We begin with the raw amino-acid sequence, 182 residues long: Pyruvoyl-dependent arginine decarboxylase (182 aa).

Serine 44 bears the Pyruvic acid (Ser) mark.

This sequence belongs to the PdaD family. It depends on pyruvate as a cofactor.

It catalyses the reaction L-arginine + H(+) = agmatine + CO2. The polypeptide is Pyruvoyl-dependent arginine decarboxylase (Thermoplasma volcanium (strain ATCC 51530 / DSM 4299 / JCM 9571 / NBRC 15438 / GSS1)).